The primary structure comprises 829 residues: Transmembrane protease serine 7 (829 aa).

The Cytoplasmic portion of the chain corresponds to 1–62 (MDKEKSDPSC…RAPFWNVQNK (62 aa)). A disordered region spans residues 26-52 (SVPGKLPGRRPPRKPIGKPRPRKQPKK). Basic residues predominate over residues 32–52 (PGRRPPRKPIGKPRPRKQPKK). Residues 63-83 (IILFTVFLFILAVTAWTLLWL) form a helical; Signal-anchor for type II membrane protein membrane-spanning segment. At 84 to 829 (YISKTESKDA…WIHKYVPSLL (746 aa)) the chain is on the extracellular side. Residues 92-220 (DAFYFVGMFR…DSVVLNAGLR (129 aa)) enclose the SEA domain. 3 disulfide bridges follow: cysteine 233/cysteine 259, cysteine 285/cysteine 308, and cysteine 351/cysteine 382. CUB domains are found at residues 233–346 (CSRY…FEVI) and 351–467 (CEST…YNIS). Residues asparagine 401 and asparagine 465 are each glycosylated (N-linked (GlcNAc...) asparagine). 3 LDL-receptor class A domains span residues 469–505 (PCPA…LFCV), 503–540 (FCVT…QNCT), and 544–581 (PCTS…EGCG). 9 cysteine pairs are disulfide-bonded: cysteine 470–cysteine 482, cysteine 477–cysteine 495, cysteine 489–cysteine 504, cysteine 511–cysteine 530, cysteine 524–cysteine 539, cysteine 545–cysteine 557, cysteine 552–cysteine 571, cysteine 565–cysteine 580, and cysteine 617–cysteine 633. A Peptidase S1 domain is found at 592 to 826 (IVGGSDSQEG…FVPWIHKYVP (235 aa)). Residues histidine 632 and aspartate 680 each act as charge relay system in the active site. Intrachain disulfides connect cysteine 716–cysteine 782, cysteine 748–cysteine 761, and cysteine 772–cysteine 802. Serine 776 (charge relay system) is an active-site residue.

This sequence belongs to the peptidase S1 family. As to quaternary structure, forms a heterodimer with SERPINA5. In terms of processing, N-glycosylated. In terms of tissue distribution, expressed in brain, eye, testis, skin, epididymis and salivary gland with lower levels in heart, skeletal muscle, thymus, ovary, prostate and uterus.

The protein resides in the cell membrane. In terms of biological role, serine protease which preferentially hydrolyzes peptides with Arg at the P1 position. This Mus musculus (Mouse) protein is Transmembrane protease serine 7 (Tmprss7).